We begin with the raw amino-acid sequence, 263 residues long: Endonuclease 8 (263 aa).

The Schiff-base intermediate with DNA role is filled by proline 2. Residue glutamate 3 is the Proton donor of the active site. Lysine 53 functions as the Proton donor; for beta-elimination activity in the catalytic mechanism. DNA is bound by residues glutamine 70, arginine 125, and asparagine 169. The FPG-type zinc-finger motif lies at 229-263; sequence KVFHRDGEACERCGGIIEKTTLSSRPFYWCPHCQK. The active-site Proton donor; for delta-elimination activity is the arginine 253.

It belongs to the FPG family. Zn(2+) is required as a cofactor.

The catalysed reaction is 2'-deoxyribonucleotide-(2'-deoxyribose 5'-phosphate)-2'-deoxyribonucleotide-DNA = a 3'-end 2'-deoxyribonucleotide-(2,3-dehydro-2,3-deoxyribose 5'-phosphate)-DNA + a 5'-end 5'-phospho-2'-deoxyribonucleoside-DNA + H(+). Involved in base excision repair of DNA damaged by oxidation or by mutagenic agents. Acts as a DNA glycosylase that recognizes and removes damaged bases. Has a preference for oxidized pyrimidines, such as thymine glycol, 5,6-dihydrouracil and 5,6-dihydrothymine. Has AP (apurinic/apyrimidinic) lyase activity and introduces nicks in the DNA strand. Cleaves the DNA backbone by beta-delta elimination to generate a single-strand break at the site of the removed base with both 3'- and 5'-phosphates. The polypeptide is Endonuclease 8 (Salmonella heidelberg (strain SL476)).